Reading from the N-terminus, the 1471-residue chain is Gag-Pol polyprotein (1471 aa).

Gly-2 carries the N-myristoyl glycine; by host lipid modification. Residues 7 to 31 form an interaction with Gp41 region; the sequence is VLSGKKTDELEKVRLRPGGKKRYCL. Residues 16 to 22 carry the Nuclear export signal motif; that stretch reads LEKVRLR. Residues 26 to 32 carry the Nuclear localization signal motif; the sequence is KKRYCLK. Positions 105-114 are enriched in basic and acidic residues; the sequence is QRHLAADTEK. The disordered stretch occupies residues 105–130; that stretch reads QRHLAADTEKMPATSRPTAPPSGGNY. Tyr-130 carries the phosphotyrosine; by host modification. The segment at 186-223 is interaction with human PPIA/CYPA and NUP153; sequence NCVGDHQAAMQIIREIINEEAADWDQQHPIPGPLPAGQ. Residues 274–360 form a dimerization/Multimerization of capsid protein p24 region; sequence YNPTNILDIK…GGPGQKARLM (87 aa). 2 consecutive CCHC-type zinc fingers follow at residues 388-405 and 409-426; these read VTCW…QCRA and QGCW…KCPE. The disordered stretch occupies residues 441–508; it reads ASQLPHDPSA…PRETLQGGDR (68 aa). Residues 484–501 are compositionally biased toward basic and acidic residues; sequence DAEKLHEDGETAEREPRE. Residues 513–517 form a dimerization of protease region; sequence PQFSL. The region spanning 533–602 is the Peptidase A2 domain; sequence EVLLDTGADD…PINIFGRNIL (70 aa). Asp-537 serves as the catalytic For protease activity; shared with dimeric partner. Dimerization of protease stretches follow at residues 561–567 and 600–612; these read GIGGFIN and NILN…LNFP. The Reverse transcriptase domain maps to 656–846; that stretch reads GQLEEAPPTN…PFKWMGYELW (191 aa). Residues Asp-721, Asp-796, and Asp-797 each contribute to the Mg(2+) site. Residues 838 to 846 form an RT 'primer grip' region; the sequence is FKWMGYELW. Residues 1008–1024 carry the Tryptophan repeat motif motif; that stretch reads WDQWWTDYWQVTWIPEW. Residues 1044 to 1167 enclose the RNase H type-1 domain; sequence LEKVETYYTD…VDHLVSQGIR (124 aa). Positions 1053, 1088, 1108, and 1159 each coordinate Mg(2+). Residues 1173–1214 form an Integrase-type zinc finger; sequence EKIEPAQEEHEKYHGNVKELVHKFGLPQLVAKQIVNSCDKCQ. 4 residues coordinate Zn(2+): His-1182, His-1186, Cys-1210, and Cys-1213. The region spanning 1224–1375 is the Integrase catalytic domain; that stretch reads VNAELGTWQM…PAERLVNMIT (152 aa). Residues Asp-1234, Asp-1286, and Glu-1322 each coordinate Mg(2+). The integrase-type DNA-binding region spans 1393–1440; it reads FQVYYREGRDQLWKGPGELLWKGEGAVLIKVGTEIKVIPRRKAKIIRH.

As to quaternary structure, homotrimer; further assembles as hexamers of trimers. Interacts with gp41 (via C-terminus). Interacts with host CALM1; this interaction induces a conformational change in the Matrix protein, triggering exposure of the myristate group. Interacts with host AP3D1; this interaction allows the polyprotein trafficking to multivesicular bodies during virus assembly. Part of the pre-integration complex (PIC) which is composed of viral genome, matrix protein, Vpr and integrase. Homodimer; the homodimer further multimerizes as homohexamers or homopentamers. Interacts with human PPIA/CYPA. Interacts with human NUP153. Interacts with host PDZD8; this interaction stabilizes the capsid. Interacts with monkey TRIM5; this interaction destabilizes the capsid. In terms of assembly, homodimer, whose active site consists of two apposed aspartic acid residues. As to quaternary structure, heterodimer of p66 RT and p51 RT (RT p66/p51). Heterodimerization of RT is essential for DNA polymerase activity. The overall folding of the subdomains is similar in p66 RT and p51 RT but the spatial arrangements of the subdomains are dramatically different. Homotetramer; may further associate as a homohexadecamer. Part of the pre-integration complex (PIC) which is composed of viral genome, matrix protein, Vpr and integrase. Interacts with human SMARCB1/INI1 and human PSIP1/LEDGF isoform 1. Interacts with human KPNA3; this interaction might play a role in nuclear import of the pre-integration complex. Interacts with human NUP153; this interaction might play a role in nuclear import of the pre-integration complex. Mg(2+) serves as cofactor. Specific enzymatic cleavages by the viral protease yield mature proteins. The protease is released by autocatalytic cleavage. The polyprotein is cleaved during and after budding, this process is termed maturation. Proteolytic cleavage of p66 RT removes the RNase H domain to yield the p51 RT subunit. Nucleocapsid protein p7 might be further cleaved after virus entry.

It localises to the host cell membrane. The protein resides in the host endosome. It is found in the host multivesicular body. The protein localises to the virion membrane. Its subcellular location is the host nucleus. It localises to the host cytoplasm. The protein resides in the virion. It carries out the reaction Endopeptidase for which the P1 residue is preferably hydrophobic.. The enzyme catalyses Endohydrolysis of RNA in RNA/DNA hybrids. Three different cleavage modes: 1. sequence-specific internal cleavage of RNA. Human immunodeficiency virus type 1 and Moloney murine leukemia virus enzymes prefer to cleave the RNA strand one nucleotide away from the RNA-DNA junction. 2. RNA 5'-end directed cleavage 13-19 nucleotides from the RNA end. 3. DNA 3'-end directed cleavage 15-20 nucleotides away from the primer terminus.. The catalysed reaction is 3'-end directed exonucleolytic cleavage of viral RNA-DNA hybrid.. It catalyses the reaction DNA(n) + a 2'-deoxyribonucleoside 5'-triphosphate = DNA(n+1) + diphosphate. Protease: The viral protease is inhibited by many synthetic protease inhibitors (PIs), such as amprenavir, atazanavir, indinavir, loprinavir, nelfinavir, ritonavir and saquinavir. Use of protease inhibitors in tritherapy regimens permit more ambitious therapeutic strategies. Reverse transcriptase/ribonuclease H: RT can be inhibited either by nucleoside RT inhibitors (NRTIs) or by non nucleoside RT inhibitors (NNRTIs). NRTIs act as chain terminators, whereas NNRTIs inhibit DNA polymerization by binding a small hydrophobic pocket near the RT active site and inducing an allosteric change in this region. Classical NRTIs are abacavir, adefovir (PMEA), didanosine (ddI), lamivudine (3TC), stavudine (d4T), tenofovir (PMPA), zalcitabine (ddC), and zidovudine (AZT). Classical NNRTIs are atevirdine (BHAP U-87201E), delavirdine, efavirenz (DMP-266), emivirine (I-EBU), and nevirapine (BI-RG-587). The tritherapies used as a basic effective treatment of AIDS associate two NRTIs and one NNRTI. Functionally, mediates, with Gag polyprotein, the essential events in virion assembly, including binding the plasma membrane, making the protein-protein interactions necessary to create spherical particles, recruiting the viral Env proteins, and packaging the genomic RNA via direct interactions with the RNA packaging sequence (Psi). Gag-Pol polyprotein may regulate its own translation, by the binding genomic RNA in the 5'-UTR. At low concentration, the polyprotein would promote translation, whereas at high concentration, the polyprotein would encapsidate genomic RNA and then shut off translation. Targets the polyprotein to the plasma membrane via a multipartite membrane-binding signal, that includes its myristoylated N-terminus. Matrix protein is part of the pre-integration complex. Implicated in the release from host cell mediated by Vpu. Binds to RNA. Its function is as follows. Forms the conical core that encapsulates the genomic RNA-nucleocapsid complex in the virion. Most core are conical, with only 7% tubular. The core is constituted by capsid protein hexamer subunits. The core is disassembled soon after virion entry. Host restriction factors such as TRIM5-alpha or TRIMCyp bind retroviral capsids and cause premature capsid disassembly, leading to blocks in reverse transcription. Capsid restriction by TRIM5 is one of the factors which restricts HIV-1 to the human species. Host PIN1 apparently facilitates the virion uncoating. On the other hand, interactions with PDZD8 or CYPA stabilize the capsid. In terms of biological role, encapsulates and protects viral dimeric unspliced genomic RNA (gRNA). Binds these RNAs through its zinc fingers. Acts as a nucleic acid chaperone which is involved in rearangement of nucleic acid secondary structure during gRNA retrotranscription. Also facilitates template switch leading to recombination. As part of the polyprotein, participates in gRNA dimerization, packaging, tRNA incorporation and virion assembly. Functionally, aspartyl protease that mediates proteolytic cleavages of Gag and Gag-Pol polyproteins during or shortly after the release of the virion from the plasma membrane. Cleavages take place as an ordered, step-wise cascade to yield mature proteins. This process is called maturation. Displays maximal activity during the budding process just prior to particle release from the cell. Also cleaves Nef and Vif, probably concomitantly with viral structural proteins on maturation of virus particles. Hydrolyzes host EIF4GI and PABP1 in order to shut off the capped cellular mRNA translation. The resulting inhibition of cellular protein synthesis serves to ensure maximal viral gene expression and to evade host immune response. Multifunctional enzyme that converts the viral RNA genome into dsDNA in the cytoplasm, shortly after virus entry into the cell. This enzyme displays a DNA polymerase activity that can copy either DNA or RNA templates, and a ribonuclease H (RNase H) activity that cleaves the RNA strand of RNA-DNA heteroduplexes in a partially processive 3' to 5' endonucleasic mode. Conversion of viral genomic RNA into dsDNA requires many steps. A tRNA(3)-Lys binds to the primer-binding site (PBS) situated at the 5'-end of the viral RNA. RT uses the 3' end of the tRNA primer to perform a short round of RNA-dependent minus-strand DNA synthesis. The reading proceeds through the U5 region and ends after the repeated (R) region which is present at both ends of viral RNA. The portion of the RNA-DNA heteroduplex is digested by the RNase H, resulting in a ssDNA product attached to the tRNA primer. This ssDNA/tRNA hybridizes with the identical R region situated at the 3' end of viral RNA. This template exchange, known as minus-strand DNA strong stop transfer, can be either intra- or intermolecular. RT uses the 3' end of this newly synthesized short ssDNA to perform the RNA-dependent minus-strand DNA synthesis of the whole template. RNase H digests the RNA template except for two polypurine tracts (PPTs) situated at the 5'-end and near the center of the genome. It is not clear if both polymerase and RNase H activities are simultaneous. RNase H probably can proceed both in a polymerase-dependent (RNA cut into small fragments by the same RT performing DNA synthesis) and a polymerase-independent mode (cleavage of remaining RNA fragments by free RTs). Secondly, RT performs DNA-directed plus-strand DNA synthesis using the PPTs that have not been removed by RNase H as primers. PPTs and tRNA primers are then removed by RNase H. The 3' and 5' ssDNA PBS regions hybridize to form a circular dsDNA intermediate. Strand displacement synthesis by RT to the PBS and PPT ends produces a blunt ended, linear dsDNA copy of the viral genome that includes long terminal repeats (LTRs) at both ends. Its function is as follows. Catalyzes viral DNA integration into the host chromosome, by performing a series of DNA cutting and joining reactions. This enzyme activity takes place after virion entry into a cell and reverse transcription of the RNA genome in dsDNA. The first step in the integration process is 3' processing. This step requires a complex comprising the viral genome, matrix protein, Vpr and integrase. This complex is called the pre-integration complex (PIC). The integrase protein removes 2 nucleotides from each 3' end of the viral DNA, leaving recessed CA OH's at the 3' ends. In the second step, the PIC enters cell nucleus. This process is mediated through integrase and Vpr proteins, and allows the virus to infect a non dividing cell. This ability to enter the nucleus is specific of lentiviruses, other retroviruses cannot and rely on cell division to access cell chromosomes. In the third step, termed strand transfer, the integrase protein joins the previously processed 3' ends to the 5' ends of strands of target cellular DNA at the site of integration. The 5'-ends are produced by integrase-catalyzed staggered cuts, 5 bp apart. A Y-shaped, gapped, recombination intermediate results, with the 5'-ends of the viral DNA strands and the 3' ends of target DNA strands remaining unjoined, flanking a gap of 5 bp. The last step is viral DNA integration into host chromosome. This involves host DNA repair synthesis in which the 5 bp gaps between the unjoined strands are filled in and then ligated. Since this process occurs at both cuts flanking the HIV genome, a 5 bp duplication of host DNA is produced at the ends of HIV-1 integration. Alternatively, Integrase may catalyze the excision of viral DNA just after strand transfer, this is termed disintegration. In Human immunodeficiency virus type 2 subtype B (isolate UC1) (HIV-2), this protein is Gag-Pol polyprotein (gag-pol).